A 460-amino-acid polypeptide reads, in one-letter code: Bifunctional protein GlmU (460 aa).

Residues 1-229 (MKNYAIILAA…FDESLGVNDR (229 aa)) are pyrophosphorylase. Residues 8 to 11 (LAAG), lysine 22, glutamine 72, and 77 to 78 (GT) contribute to the UDP-N-acetyl-alpha-D-glucosamine site. Position 102 (aspartate 102) interacts with Mg(2+). Positions 139, 154, 169, and 227 each coordinate UDP-N-acetyl-alpha-D-glucosamine. Asparagine 227 is a binding site for Mg(2+). Residues 230–250 (LALAQAEVIMQERINKQHMLN) form a linker region. The N-acetyltransferase stretch occupies residues 251–460 (GVTLQNPAAT…RLPHHPDQPQ (210 aa)). Residues arginine 332 and lysine 350 each coordinate UDP-N-acetyl-alpha-D-glucosamine. Histidine 362 serves as the catalytic Proton acceptor. 2 residues coordinate UDP-N-acetyl-alpha-D-glucosamine: tyrosine 365 and asparagine 376. Residues alanine 379, 385 to 386 (NY), serine 404, alanine 422, and arginine 439 contribute to the acetyl-CoA site.

In the N-terminal section; belongs to the N-acetylglucosamine-1-phosphate uridyltransferase family. It in the C-terminal section; belongs to the transferase hexapeptide repeat family. As to quaternary structure, homotrimer. Requires Mg(2+) as cofactor.

It is found in the cytoplasm. It catalyses the reaction alpha-D-glucosamine 1-phosphate + acetyl-CoA = N-acetyl-alpha-D-glucosamine 1-phosphate + CoA + H(+). The catalysed reaction is N-acetyl-alpha-D-glucosamine 1-phosphate + UTP + H(+) = UDP-N-acetyl-alpha-D-glucosamine + diphosphate. It functions in the pathway nucleotide-sugar biosynthesis; UDP-N-acetyl-alpha-D-glucosamine biosynthesis; N-acetyl-alpha-D-glucosamine 1-phosphate from alpha-D-glucosamine 6-phosphate (route II): step 2/2. It participates in nucleotide-sugar biosynthesis; UDP-N-acetyl-alpha-D-glucosamine biosynthesis; UDP-N-acetyl-alpha-D-glucosamine from N-acetyl-alpha-D-glucosamine 1-phosphate: step 1/1. The protein operates within bacterial outer membrane biogenesis; LPS lipid A biosynthesis. Functionally, catalyzes the last two sequential reactions in the de novo biosynthetic pathway for UDP-N-acetylglucosamine (UDP-GlcNAc). The C-terminal domain catalyzes the transfer of acetyl group from acetyl coenzyme A to glucosamine-1-phosphate (GlcN-1-P) to produce N-acetylglucosamine-1-phosphate (GlcNAc-1-P), which is converted into UDP-GlcNAc by the transfer of uridine 5-monophosphate (from uridine 5-triphosphate), a reaction catalyzed by the N-terminal domain. This Streptococcus equi subsp. zooepidemicus (strain ATCC 35246 / C74-63) protein is Bifunctional protein GlmU.